We begin with the raw amino-acid sequence, 695 residues long: DNA ligase (695 aa).

Position 30–34 (30–34) interacts with NAD(+); that stretch reads DADFD. A disordered region spans residues 52 to 71; it reads TGASPTEEVAPAPPTSSPFR. Residues 81–82 and Glu-106 contribute to the NAD(+) site; that span reads SL. Catalysis depends on Lys-108, which acts as the N6-AMP-lysine intermediate. Positions 129, 169, 285, and 309 each coordinate NAD(+). Residues Cys-403, Cys-406, Cys-422, and Cys-428 each contribute to the Zn(2+) site. One can recognise a BRCT domain in the interval 599–688; it reads VDSALLEGLT…APSSGDDAST (90 aa). Residues 676–695 form a disordered region; it reads ENGAPSSGDDASTSADSVDD. A compositionally biased stretch (low complexity) spans 679 to 695; that stretch reads APSSGDDASTSADSVDD.

Belongs to the NAD-dependent DNA ligase family. LigA subfamily. Requires Mg(2+) as cofactor. Mn(2+) is required as a cofactor.

The catalysed reaction is NAD(+) + (deoxyribonucleotide)n-3'-hydroxyl + 5'-phospho-(deoxyribonucleotide)m = (deoxyribonucleotide)n+m + AMP + beta-nicotinamide D-nucleotide.. In terms of biological role, DNA ligase that catalyzes the formation of phosphodiester linkages between 5'-phosphoryl and 3'-hydroxyl groups in double-stranded DNA using NAD as a coenzyme and as the energy source for the reaction. It is essential for DNA replication and repair of damaged DNA. This chain is DNA ligase, found in Corynebacterium jeikeium (strain K411).